Consider the following 145-residue polypeptide: Probable WRKY transcription factor 75 (145 aa).

The span at 20-38 (SKPELHQGEEESSKVRSEG) shows a compositional bias: basic and acidic residues. The disordered stretch occupies residues 20–55 (SKPELHQGEEESSKVRSEGCSKSVESSKKKGKKQRY). Positions 61–126 (SQVDILDDGY…YEGVHSHPIE (66 aa)) form a DNA-binding region, WRKY.

Belongs to the WRKY group II-c family.

It localises to the nucleus. Its function is as follows. Transcription factor. Interacts specifically with the W box (5'-(T)TGAC[CT]-3'), a frequently occurring elicitor-responsive cis-acting element. In Arabidopsis thaliana (Mouse-ear cress), this protein is Probable WRKY transcription factor 75 (WRKY75).